A 376-amino-acid chain; its full sequence is Deoxyguanosinetriphosphate triphosphohydrolase-like protein (376 aa).

The segment at 1 to 32 (MEPSFAPYAAHSSQTRGRVHREAPAAPRSEFQ) is disordered. One can recognise an HD domain in the interval 65-196 (RLTHSIEVAQ…ANLADEIAYN (132 aa)).

This sequence belongs to the dGTPase family. Type 2 subfamily.

The sequence is that of Deoxyguanosinetriphosphate triphosphohydrolase-like protein from Thiobacillus denitrificans (strain ATCC 25259 / T1).